Consider the following 116-residue polypeptide: uncharacterized protein (116 aa).

This is an uncharacterized protein from Invertebrate iridescent virus 6 (IIV-6).